The following is a 258-amino-acid chain: NAD kinase (258 aa).

Aspartate 44 functions as the Proton acceptor in the catalytic mechanism. Residues 44–45, 116–117, aspartate 146, alanine 154, and 157–162 each bind NAD(+); these read DG, NE, and TAYNLS.

This sequence belongs to the NAD kinase family. It depends on a divalent metal cation as a cofactor.

It is found in the cytoplasm. It catalyses the reaction NAD(+) + ATP = ADP + NADP(+) + H(+). Its function is as follows. Involved in the regulation of the intracellular balance of NAD and NADP, and is a key enzyme in the biosynthesis of NADP. Catalyzes specifically the phosphorylation on 2'-hydroxyl of the adenosine moiety of NAD to yield NADP. This is NAD kinase from Zymomonas mobilis subsp. mobilis (strain ATCC 31821 / ZM4 / CP4).